A 405-amino-acid chain; its full sequence is Cytoplasmic tRNA 2-thiolation protein 2 (405 aa).

The protein belongs to the CTU2/NCS2 family.

It is found in the cytoplasm. It participates in tRNA modification; 5-methoxycarbonylmethyl-2-thiouridine-tRNA biosynthesis. Its function is as follows. Plays a central role in 2-thiolation of mcm(5)S(2)U at tRNA wobble positions of tRNA(Lys), tRNA(Glu) and tRNA(Gln). May act by forming a heterodimer with NCS6/CTU1 that ligates sulfur from thiocarboxylated URM1 onto the uridine of tRNAs at wobble position. In Drosophila persimilis (Fruit fly), this protein is Cytoplasmic tRNA 2-thiolation protein 2.